Here is a 265-residue protein sequence, read N- to C-terminus: Small ribosomal subunit protein uS5 (265 aa).

Residues 1–25 (MADTTTAAQADQKPTRAFGAGRPQR) show a composition bias toward low complexity. Positions 1 to 49 (MADTTTAAQADQKPTRAFGAGRPQRGAGGAPQRGGPRPQRGGQGETKSW) are disordered. Ala-2 is subject to N-acetylalanine. Positions 89 to 152 (LKDEVMKIVP…VAAKLSVIPV (64 aa)) constitute an S5 DRBM domain.

It belongs to the universal ribosomal protein uS5 family.

Functionally, component of the ribosome, a large ribonucleoprotein complex responsible for the synthesis of proteins in the cell. The small ribosomal subunit (SSU) binds messenger RNAs (mRNAs) and translates the encoded message by selecting cognate aminoacyl-transfer RNA (tRNA) molecules. The large subunit (LSU) contains the ribosomal catalytic site termed the peptidyl transferase center (PTC), which catalyzes the formation of peptide bonds, thereby polymerizing the amino acids delivered by tRNAs into a polypeptide chain. The nascent polypeptides leave the ribosome through a tunnel in the LSU and interact with protein factors that function in enzymatic processing, targeting, and the membrane insertion of nascent chains at the exit of the ribosomal tunnel. Plays a role in the assembly and function of the 40S ribosomal subunit. Mutations in this protein affects the control of translational fidelity. Involved in nucleolar processing of pre-18S ribosomal RNA and ribosome assembly. This is Small ribosomal subunit protein uS5 (rps2) from Dictyostelium discoideum (Social amoeba).